The chain runs to 229 residues: UPF0758 protein MM_2791 (229 aa).

The region spanning 106–228 is the MPN domain; that stretch reads KISSPKDVYT…YVSLKDEGFV (123 aa). 3 residues coordinate Zn(2+): His177, His179, and Asp190. Residues 177–190 carry the JAMM motif motif; it reads HNHPSGDPSPSRED.

This sequence belongs to the UPF0758 family.

The sequence is that of UPF0758 protein MM_2791 from Methanosarcina mazei (strain ATCC BAA-159 / DSM 3647 / Goe1 / Go1 / JCM 11833 / OCM 88) (Methanosarcina frisia).